A 266-amino-acid chain; its full sequence is Diphthine synthase (266 aa).

S-adenosyl-L-methionine contacts are provided by residues leucine 9, aspartate 84, valine 87, 112-113 (SI), leucine 169, alanine 210, and histidine 235.

It belongs to the diphthine synthase family. As to quaternary structure, homodimer.

The catalysed reaction is 2-[(3S)-amino-3-carboxypropyl]-L-histidyl-[translation elongation factor 2] + 3 S-adenosyl-L-methionine = diphthine-[translation elongation factor 2] + 3 S-adenosyl-L-homocysteine + 3 H(+). Its pathway is protein modification; peptidyl-diphthamide biosynthesis. Functionally, S-adenosyl-L-methionine-dependent methyltransferase that catalyzes the trimethylation of the amino group of the modified target histidine residue in translation elongation factor 2 (EF-2), to form an intermediate called diphthine. The three successive methylation reactions represent the second step of diphthamide biosynthesis. The protein is Diphthine synthase of Methanosarcina acetivorans (strain ATCC 35395 / DSM 2834 / JCM 12185 / C2A).